The chain runs to 347 residues: Pre-B-cell leukemia transcription factor 1 (347 aa).

The segment at 1-40 (MDDQPRLMHSHPGVGMAGHPSLSQHMQDGTGANEGEGGRK) is disordered. Positions 38-232 (GRKQDIGDIL…VMILRSRFLD (195 aa)) constitute a PBC domain. The PBC-A stretch occupies residues 45 to 124 (DILQQIMTIT…EGVAGPEKGG (80 aa)). The segment at 127–232 (AAAAAAAAAS…VMILRSRFLD (106 aa)) is PBC-B. The homeobox; TALE-type DNA-binding region spans 233–295 (ARRKRRNFNK…NKRIRYKKNI (63 aa)). Residues 318–331 (VHGSQANSPSTPSS) are compositionally biased toward polar residues. The interval 318 to 347 (VHGSQANSPSTPSSAGGYPSPCYQSDRRIQ) is disordered.

This sequence belongs to the TALE/PBX homeobox family. Forms a heterodimer with meis1; the interaction is necessary for neural fate induction.

It localises to the nucleus. In terms of biological role, acts as a transcriptional activator in complex with isoform 2 of meis1, to induce posterior neural and neural crest gene expression, and thereby specify hindbrain and neural crest cell fate. Binds to a highly conserved region in the promoter of the neural crest gene zic3. Required for the nuclear transport or retention of meis1. This is Pre-B-cell leukemia transcription factor 1 from Xenopus tropicalis (Western clawed frog).